Consider the following 346-residue polypeptide: uncharacterized protein (346 aa).

Residues 1 to 27 (MKFNKISLSVSTALLAAGLAVSGSANA) form the signal peptide.

This is an uncharacterized protein from Haemophilus influenzae (strain ATCC 51907 / DSM 11121 / KW20 / Rd).